The following is a 248-amino-acid chain: Deoxyribose-phosphate aldolase (248 aa).

Asp117 serves as the catalytic Proton donor/acceptor. The Schiff-base intermediate with acetaldehyde role is filled by Lys179. Catalysis depends on Lys208, which acts as the Proton donor/acceptor.

This sequence belongs to the DeoC/FbaB aldolase family. DeoC type 1 subfamily.

It is found in the cytoplasm. The enzyme catalyses 2-deoxy-D-ribose 5-phosphate = D-glyceraldehyde 3-phosphate + acetaldehyde. Its pathway is carbohydrate degradation; 2-deoxy-D-ribose 1-phosphate degradation; D-glyceraldehyde 3-phosphate and acetaldehyde from 2-deoxy-alpha-D-ribose 1-phosphate: step 2/2. Functionally, catalyzes a reversible aldol reaction between acetaldehyde and D-glyceraldehyde 3-phosphate to generate 2-deoxy-D-ribose 5-phosphate. This is Deoxyribose-phosphate aldolase from Thermotoga maritima (strain ATCC 43589 / DSM 3109 / JCM 10099 / NBRC 100826 / MSB8).